The following is a 294-amino-acid chain: MSASKQLLKLGLPKGSLQDSTLDLFAKAGFHFSVKSRSYFPSIDDDELEAILIRAQEMAHYVELGAFDVGLTGKDWIIETDADVVEVSDLVYSKASMRPVRWVLAVPESSSIQTVKDLEGKHIATEVVNITKKYLAENNVNAHVEFSWGATEVKPPELADAIVEVTETGSSLRANKLRIVEVLLESNTKLIANRNSWNDPWKREKIENMAMLLQGAIHAQGKVGLKMNAPKDALDKIMAFIPGLRTPTVSNLADDKWVALEVIVDEQTVRSVIPDLKRAGAEGIFEYHINKLID.

It belongs to the ATP phosphoribosyltransferase family. Long subfamily. The cofactor is Mg(2+).

The protein resides in the cytoplasm. It carries out the reaction 1-(5-phospho-beta-D-ribosyl)-ATP + diphosphate = 5-phospho-alpha-D-ribose 1-diphosphate + ATP. Its pathway is amino-acid biosynthesis; L-histidine biosynthesis; L-histidine from 5-phospho-alpha-D-ribose 1-diphosphate: step 1/9. Feedback inhibited by histidine. Functionally, catalyzes the condensation of ATP and 5-phosphoribose 1-diphosphate to form N'-(5'-phosphoribosyl)-ATP (PR-ATP). Has a crucial role in the pathway because the rate of histidine biosynthesis seems to be controlled primarily by regulation of HisG enzymatic activity. This chain is ATP phosphoribosyltransferase, found in Prosthecochloris aestuarii (strain DSM 271 / SK 413).